The chain runs to 277 residues: Large ribosomal subunit protein uL2 (277 aa).

The segment at 220-277 (VRGSVMNPNDHPHGGGEGKAPIGRPSPMSPWGKKTLGKKTRSSKARSEKLIIRHRKSR) is disordered. The span at 254 to 263 (TLGKKTRSSK) shows a compositional bias: basic residues.

Belongs to the universal ribosomal protein uL2 family. In terms of assembly, part of the 50S ribosomal subunit. Forms a bridge to the 30S subunit in the 70S ribosome.

One of the primary rRNA binding proteins. Required for association of the 30S and 50S subunits to form the 70S ribosome, for tRNA binding and peptide bond formation. It has been suggested to have peptidyltransferase activity; this is somewhat controversial. Makes several contacts with the 16S rRNA in the 70S ribosome. In Latilactobacillus sakei subsp. sakei (strain 23K) (Lactobacillus sakei subsp. sakei), this protein is Large ribosomal subunit protein uL2.